The following is a 77-amino-acid chain: Large ribosomal subunit protein bL28 (77 aa).

Residues 1-25 form a disordered region; sequence MARVCQVTGKAPMSGNNVSHANNKT.

This sequence belongs to the bacterial ribosomal protein bL28 family.

The sequence is that of Large ribosomal subunit protein bL28 from Paraburkholderia xenovorans (strain LB400).